Here is a 650-residue protein sequence, read N- to C-terminus: Replication protein E1 (650 aa).

The Nuclear localization signal motif lies at 88–90 (KRK). Phosphoserine; by host occurs at positions 94, 98, and 109. The Nuclear export signal motif lies at 108 to 117 (LSPRLDAISI). The disordered stretch occupies residues 134-184 (GYGHTQVDIGAPESQVSGGTQHTKGGGGAVQEAEEERVGGDGEAQCSAQTQ). The tract at residues 185-351 (QTPERAADVL…QTVVGHAMQE (167 aa)) is DNA-binding region. The SF3 helicase domain maps to 450-600 (VEFVTFMGAL…CPLKSNGDPV (151 aa)). 476 to 483 (GPSDTGKS) provides a ligand contact to ATP. Lysine 557 participates in a covalent cross-link: Glycyl lysine isopeptide (Lys-Gly) (interchain with G-Cter in SUMO). The segment at 620–650 (EGPDEQEEEEDEDGSTSRPFRCVPGEIARPL) is disordered. Positions 622-633 (PDEQEEEEDEDG) are enriched in acidic residues.

It belongs to the papillomaviridae E1 protein family. As to quaternary structure, can form hexamers. Interacts with E2 protein; this interaction increases E1 DNA binding specificity. Interacts with host DNA polymerase subunit POLA2. Interacts with host single stranded DNA-binding protein RPA1. Interacts with host TOP1; this interaction stimulates the enzymatic activity of TOP1. Post-translationally, phosphorylated. In terms of processing, sumoylated.

The protein localises to the host nucleus. It carries out the reaction Couples ATP hydrolysis with the unwinding of duplex DNA by translocating in the 3'-5' direction.. It catalyses the reaction ATP + H2O = ADP + phosphate + H(+). Its function is as follows. ATP-dependent DNA 3'-5' helicase required for initiation of viral DNA replication. It forms a complex with the viral E2 protein. The E1-E2 complex binds to the replication origin which contains binding sites for both proteins. During the initial step, a dimer of E1 interacts with a dimer of protein E2 leading to a complex that binds the viral origin of replication with high specificity. Then, a second dimer of E1 displaces the E2 dimer in an ATP-dependent manner to form the E1 tetramer. Following this, two E1 monomers are added to each half of the site, which results in the formation of two E1 trimers on the viral ori. Subsequently, two hexamers will be created. The double hexamer acts as a bi-directional helicase machinery and unwinds the viral DNA and then recruits the host DNA polymerase to start replication. The chain is Replication protein E1 from Homo sapiens (Human).